A 306-amino-acid chain; its full sequence is Aspartate carbamoyltransferase catalytic subunit (306 aa).

Carbamoyl phosphate contacts are provided by Arg-56 and Thr-57. Lys-84 contributes to the L-aspartate binding site. Arg-106, His-134, and Gln-137 together coordinate carbamoyl phosphate. Residues Arg-167 and Arg-221 each contribute to the L-aspartate site. 2 residues coordinate carbamoyl phosphate: Gly-262 and Pro-263.

It belongs to the aspartate/ornithine carbamoyltransferase superfamily. ATCase family. In terms of assembly, heterododecamer (2C3:3R2) of six catalytic PyrB chains organized as two trimers (C3), and six regulatory PyrI chains organized as three dimers (R2).

It catalyses the reaction carbamoyl phosphate + L-aspartate = N-carbamoyl-L-aspartate + phosphate + H(+). Its pathway is pyrimidine metabolism; UMP biosynthesis via de novo pathway; (S)-dihydroorotate from bicarbonate: step 2/3. Its function is as follows. Catalyzes the condensation of carbamoyl phosphate and aspartate to form carbamoyl aspartate and inorganic phosphate, the committed step in the de novo pyrimidine nucleotide biosynthesis pathway. In Desulforudis audaxviator (strain MP104C), this protein is Aspartate carbamoyltransferase catalytic subunit.